Here is a 396-residue protein sequence, read N- to C-terminus: Elongation factor Tu (396 aa).

One can recognise a tr-type G domain in the interval 10–207; sequence KPHCNIGTIG…VDAYIPQPPR (198 aa). The interval 19–26 is G1; sequence GHVDHGKT. GTP is bound at residue 19 to 26; that stretch reads GHVDHGKT. T26 serves as a coordination point for Mg(2+). Residues 60 to 64 are G2; it reads GITIS. The tract at residues 81–84 is G3; the sequence is DCPG. GTP-binding positions include 81–85 and 136–139; these read DCPGH and NKVD. The segment at 136–139 is G4; sequence NKVD. Positions 174-176 are G5; that stretch reads SAL.

Belongs to the TRAFAC class translation factor GTPase superfamily. Classic translation factor GTPase family. EF-Tu/EF-1A subfamily. Monomer.

Its subcellular location is the cytoplasm. It carries out the reaction GTP + H2O = GDP + phosphate + H(+). In terms of biological role, GTP hydrolase that promotes the GTP-dependent binding of aminoacyl-tRNA to the A-site of ribosomes during protein biosynthesis. The chain is Elongation factor Tu from Novosphingobium aromaticivorans (strain ATCC 700278 / DSM 12444 / CCUG 56034 / CIP 105152 / NBRC 16084 / F199).